The following is a 507-amino-acid chain: ATP synthase subunit alpha (507 aa).

168-175 contributes to the ATP binding site; the sequence is GDRKTGKT.

This sequence belongs to the ATPase alpha/beta chains family. As to quaternary structure, F-type ATPases have 2 components, CF(1) - the catalytic core - and CF(0) - the membrane proton channel. CF(1) has five subunits: alpha(3), beta(3), gamma(1), delta(1), epsilon(1). CF(0) has three main subunits: a(1), b(2) and c(9-12). The alpha and beta chains form an alternating ring which encloses part of the gamma chain. CF(1) is attached to CF(0) by a central stalk formed by the gamma and epsilon chains, while a peripheral stalk is formed by the delta and b chains.

It localises to the cell inner membrane. It catalyses the reaction ATP + H2O + 4 H(+)(in) = ADP + phosphate + 5 H(+)(out). Produces ATP from ADP in the presence of a proton gradient across the membrane. The alpha chain is a regulatory subunit. The protein is ATP synthase subunit alpha of Ehrlichia ruminantium (strain Gardel).